A 557-amino-acid chain; its full sequence is Transmembrane protein 209 (557 aa).

Residues 28-48 traverse the membrane as a helical segment; sequence VVLAWGLLNVSLAGMIYTEMT. N-linked (GlcNAc...) asparagine glycosylation is present at N57. Residues 60 to 80 traverse the membrane as a helical segment; it reads YWPLWYIELALASLFSLNALF. 2 disordered regions span residues 108–156 and 194–232; these read PYSS…KFSP and YSSSPGSSQYPSNLGPVEGGLRSRYRSSPSTYSSPTDKE. Residues 125 to 140 are compositionally biased toward polar residues; that stretch reads VPASTPSPSMQGQNVL. Low complexity-rich tracts occupy residues 141-156, 194-205, and 219-228; these read SYSPSRSPSSSPKFSP, YSSSPGSSQYPS, and RSSPSTYSSP. 2 N-linked (GlcNAc...) asparagine glycosylation sites follow: N273 and N343.

It is found in the membrane. Its subcellular location is the nucleus envelope. The protein resides in the golgi apparatus. It localises to the cytoplasm. This is Transmembrane protein 209 (tmem209) from Xenopus tropicalis (Western clawed frog).